We begin with the raw amino-acid sequence, 424 residues long: Glutamate-1-semialdehyde 2,1-aminomutase (424 aa).

Lys-268 bears the N6-(pyridoxal phosphate)lysine mark.

The protein belongs to the class-III pyridoxal-phosphate-dependent aminotransferase family. HemL subfamily. Pyridoxal 5'-phosphate serves as cofactor.

The protein resides in the cytoplasm. The catalysed reaction is (S)-4-amino-5-oxopentanoate = 5-aminolevulinate. It functions in the pathway porphyrin-containing compound metabolism; protoporphyrin-IX biosynthesis; 5-aminolevulinate from L-glutamyl-tRNA(Glu): step 2/2. This is Glutamate-1-semialdehyde 2,1-aminomutase from Methanosarcina acetivorans (strain ATCC 35395 / DSM 2834 / JCM 12185 / C2A).